We begin with the raw amino-acid sequence, 178 residues long: 2-C-methyl-D-erythritol 2,4-cyclodiphosphate synthase (178 aa).

Residues Asp-24, His-26, and His-61 each contribute to the a divalent metal cation site. A 4-CDP-2-C-methyl-D-erythritol 2-phosphate-binding site is contributed by 24-26 (DSH). 4-CDP-2-C-methyl-D-erythritol 2-phosphate is bound at residue 150–153 (TSGE).

Belongs to the IspF family. Homotrimer. It depends on a divalent metal cation as a cofactor.

The enzyme catalyses 4-CDP-2-C-methyl-D-erythritol 2-phosphate = 2-C-methyl-D-erythritol 2,4-cyclic diphosphate + CMP. The protein operates within isoprenoid biosynthesis; isopentenyl diphosphate biosynthesis via DXP pathway; isopentenyl diphosphate from 1-deoxy-D-xylulose 5-phosphate: step 4/6. Functionally, involved in the biosynthesis of isopentenyl diphosphate (IPP) and dimethylallyl diphosphate (DMAPP), two major building blocks of isoprenoid compounds. Catalyzes the conversion of 4-diphosphocytidyl-2-C-methyl-D-erythritol 2-phosphate (CDP-ME2P) to 2-C-methyl-D-erythritol 2,4-cyclodiphosphate (ME-CPP) with a corresponding release of cytidine 5-monophosphate (CMP). The chain is 2-C-methyl-D-erythritol 2,4-cyclodiphosphate synthase from Chlamydia trachomatis serovar L2b (strain UCH-1/proctitis).